The chain runs to 359 residues: Peptide chain release factor 1 (359 aa).

Gln236 is subject to N5-methylglutamine.

It belongs to the prokaryotic/mitochondrial release factor family. Post-translationally, methylated by PrmC. Methylation increases the termination efficiency of RF1.

It is found in the cytoplasm. Peptide chain release factor 1 directs the termination of translation in response to the peptide chain termination codons UAG and UAA. The protein is Peptide chain release factor 1 of Streptococcus pyogenes serotype M1.